The sequence spans 181 residues: ATP-dependent protease subunit HslV (181 aa).

T5 is an active-site residue. Positions 162, 165, and 168 each coordinate Na(+).

It belongs to the peptidase T1B family. HslV subfamily. In terms of assembly, a double ring-shaped homohexamer of HslV is capped on each side by a ring-shaped HslU homohexamer. The assembly of the HslU/HslV complex is dependent on binding of ATP.

It localises to the cytoplasm. It carries out the reaction ATP-dependent cleavage of peptide bonds with broad specificity.. Allosterically activated by HslU binding. Protease subunit of a proteasome-like degradation complex believed to be a general protein degrading machinery. The chain is ATP-dependent protease subunit HslV from Campylobacter hominis (strain ATCC BAA-381 / DSM 21671 / CCUG 45161 / LMG 19568 / NCTC 13146 / CH001A).